A 274-amino-acid polypeptide reads, in one-letter code: Shikimate dehydrogenase (NADP(+)) (274 aa).

Shikimate is bound by residues 14 to 16 and Thr-61; that span reads SLS. Lys-65 serves as the catalytic Proton acceptor. Shikimate contacts are provided by Asn-85 and Asp-106. NADP(+)-binding positions include 130–134, 153–158, and Ala-217; these read GAGGA and NRTAER. Residue Tyr-219 coordinates shikimate. Gly-240 contacts NADP(+).

Belongs to the shikimate dehydrogenase family. Homodimer.

The catalysed reaction is shikimate + NADP(+) = 3-dehydroshikimate + NADPH + H(+). It functions in the pathway metabolic intermediate biosynthesis; chorismate biosynthesis; chorismate from D-erythrose 4-phosphate and phosphoenolpyruvate: step 4/7. Its function is as follows. Involved in the biosynthesis of the chorismate, which leads to the biosynthesis of aromatic amino acids. Catalyzes the reversible NADPH linked reduction of 3-dehydroshikimate (DHSA) to yield shikimate (SA). In Halorubrum lacusprofundi (strain ATCC 49239 / DSM 5036 / JCM 8891 / ACAM 34), this protein is Shikimate dehydrogenase (NADP(+)).